Consider the following 342-residue polypeptide: Anthranilate phosphoribosyltransferase (342 aa).

Residues G81, G84 to D85, N91 to S94, K109 to S117, and S121 contribute to the 5-phospho-alpha-D-ribose 1-diphosphate site. Anthranilate is bound at residue G81. S93 is a Mg(2+) binding site. N112 is a binding site for anthranilate. R167 contributes to the anthranilate binding site. Residues D226 and E227 each contribute to the Mg(2+) site.

This sequence belongs to the anthranilate phosphoribosyltransferase family. In terms of assembly, homodimer. The cofactor is Mg(2+).

It carries out the reaction N-(5-phospho-beta-D-ribosyl)anthranilate + diphosphate = 5-phospho-alpha-D-ribose 1-diphosphate + anthranilate. Its pathway is amino-acid biosynthesis; L-tryptophan biosynthesis; L-tryptophan from chorismate: step 2/5. Functionally, catalyzes the transfer of the phosphoribosyl group of 5-phosphorylribose-1-pyrophosphate (PRPP) to anthranilate to yield N-(5'-phosphoribosyl)-anthranilate (PRA). The chain is Anthranilate phosphoribosyltransferase from Marinobacter nauticus (strain ATCC 700491 / DSM 11845 / VT8) (Marinobacter aquaeolei).